Here is a 124-residue protein sequence, read N- to C-terminus: Insulin growth factor-like family member 4 (124 aa).

Positions 1–19 (MVPRISAAIFIFELLGSNS) are cleaved as a signal peptide. Residues Asn57 and Asn84 are each glycosylated (N-linked (GlcNAc...) asparagine).

The protein belongs to the IGFL family. As to expression, detected in the cerebellum.

It is found in the secreted. This is Insulin growth factor-like family member 4 (IGFL4) from Homo sapiens (Human).